Reading from the N-terminus, the 307-residue chain is Thioredoxin-related transmembrane protein 2-B (307 aa).

The N-terminal stretch at 1 to 19 is a signal peptide; the sequence is MALLTPLFAFLYHLPQVYK. Over 20–111 the chain is Extracellular; it reads WLLKPYYIAS…VILFFRLDIR (92 aa). The chain crosses the membrane as a helical span at residues 112–132; it reads LGLLYLTLCIVFLMTCKPPLY. One can recognise a Thioredoxin domain in the interval 132-269; that stretch reads YMGPEYIKYF…LYQKSKKLGK (138 aa). Residues 133–307 are Cytoplasmic-facing; sequence MGPEYIKYFS…AMDTESKKDK (175 aa). The segment at 268 to 307 is disordered; the sequence is GKTKEKLERPSELVFSTVPEEEEPEAETISAMDTESKKDK. Positions 269–278 are enriched in basic and acidic residues; the sequence is KTKEKLERPS. The Di-lysine motif signature appears at 304–307; sequence KKDK.

Monomer. Homodimer; disulfide-linked. Occurs in both reduced and oxidized monomeric form. Oxidative conditions increase homodimerization.

The protein localises to the endoplasmic reticulum membrane. It is found in the mitochondrion membrane. Its function is as follows. Endoplasmic reticulum and mitochondria-associated protein that probably functions as a regulator of cellular redox state and thereby regulates protein post-translational modification, protein folding and mitochondrial activity. In Danio rerio (Zebrafish), this protein is Thioredoxin-related transmembrane protein 2-B (tmx2b).